The chain runs to 216 residues: Cytochrome c biogenesis ATP-binding export protein CcmA (216 aa).

The ABC transporter domain maps to 11 to 216 (VSASKLTCIR…RKIRLDYRFV (206 aa)). 43–50 (GPNGAGKT) is a binding site for ATP.

The protein belongs to the ABC transporter superfamily. CcmA exporter (TC 3.A.1.107) family. The complex is composed of two ATP-binding proteins (CcmA) and two transmembrane proteins (CcmB).

It localises to the cell inner membrane. The catalysed reaction is heme b(in) + ATP + H2O = heme b(out) + ADP + phosphate + H(+). Part of the ABC transporter complex CcmAB involved in the biogenesis of c-type cytochromes; once thought to export heme, this seems not to be the case, but its exact role is uncertain. Responsible for energy coupling to the transport system. In Shewanella sp. (strain MR-7), this protein is Cytochrome c biogenesis ATP-binding export protein CcmA.